A 249-amino-acid polypeptide reads, in one-letter code: Exosome complex component Rrp41 (249 aa).

This sequence belongs to the RNase PH family. Rrp41 subfamily. Component of the archaeal exosome complex. Forms a hexameric ring-like arrangement composed of 3 Rrp41-Rrp42 heterodimers. The hexameric ring associates with a trimer of Rrp4 and/or Csl4 subunits.

The protein localises to the cytoplasm. Catalytic component of the exosome, which is a complex involved in RNA degradation. Has 3'-&gt;5' exoribonuclease activity. Can also synthesize heteromeric RNA-tails. The chain is Exosome complex component Rrp41 from Thermococcus kodakarensis (strain ATCC BAA-918 / JCM 12380 / KOD1) (Pyrococcus kodakaraensis (strain KOD1)).